The following is a 374-amino-acid chain: MSTEKINLLDFDRKGLRELFAQELGEKAFRADQVMKWIYHFGVDDFDNMTNINKQLREKLKQKCEIVAPVVSEAQHSSDGTIKWAMRVGDQDVETVYIPEEDRATLCVSSQVGCALECKFCSTAQQGFNRNLKVSEIIGQVWRAAREVGLEKETGRRPITNVVMMGMGEPLLNMKNLIPALEIMLDDLGFGLSKRRVTVSTSGVVSGLDQMTGKIDVALAISLHAPNDKLRSEIMPINDRWDIQDFLASVRRYIASSNANRGKVTVEYVLLDHVNDGTEHAHELAQLMKDTPCKINLIPFNPYPGSPYKKPSNSRIDRFQKTLMQYEHTVTIRKTRGDDIDAACGQLVGDVIDRTKRTAMLKAAKGETIEVKAL.

Catalysis depends on Glu-94, which acts as the Proton acceptor. The Radical SAM core domain maps to 100-339; that stretch reads EEDRATLCVS…VTIRKTRGDD (240 aa). A disulfide bridge links Cys-107 with Cys-344. Residues Cys-114, Cys-118, and Cys-121 each coordinate [4Fe-4S] cluster. Residues 168-169, Ser-200, 222-224, and Asn-301 each bind S-adenosyl-L-methionine; these read GE and SLH. Residue Cys-344 is the S-methylcysteine intermediate of the active site.

The protein belongs to the radical SAM superfamily. RlmN family. Requires [4Fe-4S] cluster as cofactor.

It is found in the cytoplasm. It carries out the reaction adenosine(2503) in 23S rRNA + 2 reduced [2Fe-2S]-[ferredoxin] + 2 S-adenosyl-L-methionine = 2-methyladenosine(2503) in 23S rRNA + 5'-deoxyadenosine + L-methionine + 2 oxidized [2Fe-2S]-[ferredoxin] + S-adenosyl-L-homocysteine. The catalysed reaction is adenosine(37) in tRNA + 2 reduced [2Fe-2S]-[ferredoxin] + 2 S-adenosyl-L-methionine = 2-methyladenosine(37) in tRNA + 5'-deoxyadenosine + L-methionine + 2 oxidized [2Fe-2S]-[ferredoxin] + S-adenosyl-L-homocysteine. Its function is as follows. Specifically methylates position 2 of adenine 2503 in 23S rRNA and position 2 of adenine 37 in tRNAs. m2A2503 modification seems to play a crucial role in the proofreading step occurring at the peptidyl transferase center and thus would serve to optimize ribosomal fidelity. The polypeptide is Dual-specificity RNA methyltransferase RlmN (Vibrio vulnificus (strain YJ016)).